Here is a 596-residue protein sequence, read N- to C-terminus: Elongation factor 4 (596 aa).

The tr-type G domain maps to 2-183 (ENIRNFCIIA…AIIQRIPPPK (182 aa)). GTP is bound by residues 14–19 (DHGKST) and 130–133 (NKID).

This sequence belongs to the TRAFAC class translation factor GTPase superfamily. Classic translation factor GTPase family. LepA subfamily.

The protein resides in the cell inner membrane. The catalysed reaction is GTP + H2O = GDP + phosphate + H(+). Its function is as follows. Required for accurate and efficient protein synthesis under certain stress conditions. May act as a fidelity factor of the translation reaction, by catalyzing a one-codon backward translocation of tRNAs on improperly translocated ribosomes. Back-translocation proceeds from a post-translocation (POST) complex to a pre-translocation (PRE) complex, thus giving elongation factor G a second chance to translocate the tRNAs correctly. Binds to ribosomes in a GTP-dependent manner. The chain is Elongation factor 4 from Cytophaga hutchinsonii (strain ATCC 33406 / DSM 1761 / CIP 103989 / NBRC 15051 / NCIMB 9469 / D465).